The primary structure comprises 324 residues: Acetyl-coenzyme A carboxylase carboxyl transferase subunit alpha (324 aa).

Residues 42-296 (RLSELEEEVY…EKALTRLAEK (255 aa)) form the CoA carboxyltransferase C-terminal domain.

Belongs to the AccA family. As to quaternary structure, acetyl-CoA carboxylase is a heterohexamer composed of biotin carboxyl carrier protein (AccB), biotin carboxylase (AccC) and two subunits each of ACCase subunit alpha (AccA) and ACCase subunit beta (AccD).

The protein resides in the cytoplasm. It carries out the reaction N(6)-carboxybiotinyl-L-lysyl-[protein] + acetyl-CoA = N(6)-biotinyl-L-lysyl-[protein] + malonyl-CoA. The protein operates within lipid metabolism; malonyl-CoA biosynthesis; malonyl-CoA from acetyl-CoA: step 1/1. In terms of biological role, component of the acetyl coenzyme A carboxylase (ACC) complex. First, biotin carboxylase catalyzes the carboxylation of biotin on its carrier protein (BCCP) and then the CO(2) group is transferred by the carboxyltransferase to acetyl-CoA to form malonyl-CoA. The protein is Acetyl-coenzyme A carboxylase carboxyl transferase subunit alpha of Shouchella clausii (strain KSM-K16) (Alkalihalobacillus clausii).